The chain runs to 21 residues: Dahlein-5.4 (21 aa).

Expressed by the skin dorsal glands.

The protein resides in the secreted. Its function is as follows. Has no antimicrobial activity. Strongly inhibits the formation of NO by neuronal nitric oxide synthase at micromolar concentrations. This chain is Dahlein-5.4, found in Ranoidea dahlii (Dahl's aquatic frog).